Reading from the N-terminus, the 367-residue chain is tRNA-specific 2-thiouridylase MnmA (367 aa).

ATP-binding positions include 13–20 (GLSGGVDS) and methionine 39. The segment at 99 to 101 (NPD) is interaction with target base in tRNA. The active-site Nucleophile is the cysteine 104. A disulfide bond links cysteine 104 and cysteine 200. Glycine 128 provides a ligand contact to ATP. An interaction with tRNA region spans residues 150-152 (KDQ). Cysteine 200 acts as the Cysteine persulfide intermediate in catalysis. Positions 307 to 308 (RY) are interaction with tRNA.

Belongs to the MnmA/TRMU family.

It is found in the cytoplasm. It catalyses the reaction S-sulfanyl-L-cysteinyl-[protein] + uridine(34) in tRNA + AH2 + ATP = 2-thiouridine(34) in tRNA + L-cysteinyl-[protein] + A + AMP + diphosphate + H(+). Catalyzes the 2-thiolation of uridine at the wobble position (U34) of tRNA, leading to the formation of s(2)U34. This is tRNA-specific 2-thiouridylase MnmA from Neisseria meningitidis serogroup B (strain ATCC BAA-335 / MC58).